A 414-amino-acid chain; its full sequence is Inositol-tetrakisphosphate 1-kinase (414 aa).

K18 lines the 1D-myo-inositol 1,3,4-trisphosphate pocket. ATP-binding residues include R106 and K157. An ATP-grasp domain is found at 117 to 325 (EAYMEDDRIC…IATVLQGQST (209 aa)). 1D-myo-inositol 1,3,4-trisphosphate contacts are provided by H167 and K199. ATP-binding positions include 188–199 (QNFINHNAVLYK), S214, S232, and S236. Residues D281, D295, and N297 each contribute to the Mg(2+) site. N297 is a 1D-myo-inositol 1,3,4-trisphosphate binding site. An N6-acetyllysine; by EP300 and CREBBP mark is found at K340 and K383. The residue at position 396 (S396) is a Phosphoserine. N6-acetyllysine; by EP300 and CREBBP is present on K410.

The protein belongs to the ITPK1 family. Monomer. Interacts with GPS1/COPS1. The cofactor is Mg(2+). Acetylation by EP300 and CREBBP destabilizes ITPK1, and down-regulates enzymatic activity. Deacetylated by SIRT1. In terms of tissue distribution, expressed in brain &gt; heart &gt; skeletal muscle = kidney = pancreas = liver = placenta &gt; lung. In brain, it is expressed in cerebellum, cerebral cortex, medulla, spinal cord, occipital lobe, frontal lobe, temporal lobe and putamen.

The catalysed reaction is 1D-myo-inositol 3,4,5,6-tetrakisphosphate + ATP = 1D-myo-inositol 1,3,4,5,6-pentakisphosphate + ADP + H(+). It catalyses the reaction 1D-myo-inositol 1,3,4-trisphosphate + ATP = 1D-myo-inositol 1,3,4,5-tetrakisphosphate + ADP + H(+). It carries out the reaction 1D-myo-inositol 1,3,4-trisphosphate + ATP = 1D-myo-inositol 1,3,4,6-tetrakisphosphate + ADP + H(+). The enzyme catalyses 1D-myo-inositol 3,4,6-trisphosphate + ATP = 1D-myo-inositol 1,3,4,6-tetrakisphosphate + ADP + H(+). The catalysed reaction is 1D-myo-inositol 1,3,4-trisphosphate + 1D-myo-inositol 1,3,4,5,6-pentakisphosphate = 1D-myo-inositol 3,4,5,6-tetrakisphosphate + 1D-myo-inositol 1,3,4,6-tetrakisphosphate. It catalyses the reaction 1D-myo-inositol 1,3,4-trisphosphate + 1D-myo-inositol 1,3,4,5,6-pentakisphosphate = 1D-myo-inositol 3,4,5,6-tetrakisphosphate + 1D-myo-inositol 1,3,4,5-tetrakisphosphate. Functionally, kinase that can phosphorylate various inositol polyphosphate such as Ins(3,4,5,6)P4 or Ins(1,3,4)P3. Phosphorylates Ins(3,4,5,6)P4 at position 1 to form Ins(1,3,4,5,6)P5. This reaction is thought to have regulatory importance, since Ins(3,4,5,6)P4 is an inhibitor of plasma membrane Ca(2+)-activated Cl(-) channels, while Ins(1,3,4,5,6)P5 is not. Also phosphorylates Ins(1,3,4)P3 on O-5 and O-6 to form Ins(1,3,4,6)P4, an essential molecule in the hexakisphosphate (InsP6) pathway. Also acts as an inositol polyphosphate phosphatase that dephosphorylates Ins(1,3,4,5)P4 and Ins(1,3,4,6)P4 to Ins(1,3,4)P3, and Ins(1,3,4,5,6)P5 to Ins(3,4,5,6)P4. May also act as an isomerase that interconverts the inositol tetrakisphosphate isomers Ins(1,3,4,5)P4 and Ins(1,3,4,6)P4 in the presence of ADP and magnesium. Probably acts as the rate-limiting enzyme of the InsP6 pathway. Modifies TNF-alpha-induced apoptosis by interfering with the activation of TNFRSF1A-associated death domain. Plays an important role in MLKL-mediated necroptosis. Produces highly phosphorylated inositol phosphates such as inositolhexakisphosphate (InsP6) which bind to MLKL mediating the release of an N-terminal auto-inhibitory region leading to its activation. Essential for activated phospho-MLKL to oligomerize and localize to the cell membrane during necroptosis. The protein is Inositol-tetrakisphosphate 1-kinase of Homo sapiens (Human).